Consider the following 315-residue polypeptide: Diacylglycerol kinase (315 aa).

In terms of domain architecture, DAGKc spans 1 to 132 (MRKRARIIYN…VDIGKMNNRY (132 aa)). ATP contacts are provided by residues 10–14 (NPTSG), Thr-41, 67–73 (GDGTLNE), and Thr-94. The Mg(2+) site is built by Lys-213, Asp-216, and Tyr-218. The active-site Proton acceptor is Glu-273.

It belongs to the diacylglycerol/lipid kinase family. Homodimer. The cofactor is Mg(2+).

It carries out the reaction a 1,2-diacyl-sn-glycerol + ATP = a 1,2-diacyl-sn-glycero-3-phosphate + ADP + H(+). Functionally, catalyzes the phosphorylation of diacylglycerol (DAG) into phosphatidic acid. Is a key enzyme involved in the production of lipoteichoic acid by reintroducing DAG formed from the breakdown of membrane phospholipids into the phosphatidylglycerol biosynthetic pathway. The sequence is that of Diacylglycerol kinase (dagK) from Staphylococcus aureus (strain MRSA252).